A 330-amino-acid chain; its full sequence is tRNA pseudouridine synthase B (330 aa).

The Nucleophile role is filled by D42.

This sequence belongs to the pseudouridine synthase TruB family. Type 1 subfamily.

The enzyme catalyses uridine(55) in tRNA = pseudouridine(55) in tRNA. In terms of biological role, responsible for synthesis of pseudouridine from uracil-55 in the psi GC loop of transfer RNAs. The chain is tRNA pseudouridine synthase B from Lactococcus lactis subsp. cremoris (strain SK11).